Reading from the N-terminus, the 392-residue chain is MKFVDEATILVVAGDGGNGCVSFRREKYIPKGGPDGGDGGDGGDVWLEADENLNTLIDYRFEKSFRAERGQNGQSRDCTGKRGKDVTVKVPVGTRVIDQGTGETMGDMTKHGQRLMVAKGGWHGLGNTRFKSSVNRTPRQKTMGTPGDKRDLQLELMLLADVGMLGMPNAGKSTFIRAVSAAKPKVADYPFTTLVPSLGVVRMDNEKSFVVADIPGLIEGAAEGAGLGIRFLKHLERCRVLLHLIDIDPIDGSDPVENARIIIGELEKYSEKLASKPRWLVFNKIDLMDKAEAEAKAKAIAEALGWEEKFYLISAASQQGVKELCWDVMTFIIENPIVQAEEEQKPEKVEFMWDDYHRQQLEEAEAEAEDDEDWDDDWDEDDEEGVEFIYKR.

In terms of domain architecture, Obg spans 1–159 (MKFVDEATIL…RDLQLELMLL (159 aa)). The interval 127 to 148 (NTRFKSSVNRTPRQKTMGTPGD) is disordered. Residues 129–143 (RFKSSVNRTPRQKTM) are compositionally biased toward polar residues. The OBG-type G domain occupies 160 to 333 (ADVGMLGMPN…LCWDVMTFII (174 aa)). Residues 166–173 (GMPNAGKS), 191–195 (FTTLV), 213–216 (DIPG), 283–286 (NKID), and 314–316 (SAA) each bind GTP. S173 and T193 together coordinate Mg(2+). The segment covering 362–386 (EEAEAEAEDDEDWDDDWDEDDEEGV) has biased composition (acidic residues). A disordered region spans residues 362–392 (EEAEAEAEDDEDWDDDWDEDDEEGVEFIYKR).

Belongs to the TRAFAC class OBG-HflX-like GTPase superfamily. OBG GTPase family. Monomer. Mg(2+) is required as a cofactor.

It localises to the cytoplasm. Its function is as follows. An essential GTPase which binds GTP, GDP and possibly (p)ppGpp with moderate affinity, with high nucleotide exchange rates and a fairly low GTP hydrolysis rate. Plays a role in control of the cell cycle, stress response, ribosome biogenesis and in those bacteria that undergo differentiation, in morphogenesis control. The chain is GTPase Obg from Klebsiella pneumoniae subsp. pneumoniae (strain ATCC 700721 / MGH 78578).